Consider the following 440-residue polypeptide: Phosphoglucosamine mutase (440 aa).

The active-site Phosphoserine intermediate is Ser-97. Positions 97, 237, 239, and 241 each coordinate Mg(2+). Residue Ser-97 is modified to Phosphoserine.

It belongs to the phosphohexose mutase family. The cofactor is Mg(2+). Activated by phosphorylation.

It catalyses the reaction alpha-D-glucosamine 1-phosphate = D-glucosamine 6-phosphate. Its function is as follows. Catalyzes the conversion of glucosamine-6-phosphate to glucosamine-1-phosphate. The protein is Phosphoglucosamine mutase of Nautilia profundicola (strain ATCC BAA-1463 / DSM 18972 / AmH).